The following is a 195-amino-acid chain: ATP-dependent Clp protease proteolytic subunit (195 aa).

Residue Ser-101 is the Nucleophile of the active site. Residue His-126 is part of the active site.

It belongs to the peptidase S14 family. As to quaternary structure, component of the chloroplastic Clp protease core complex.

It localises to the plastid. It is found in the chloroplast stroma. It carries out the reaction Hydrolysis of proteins to small peptides in the presence of ATP and magnesium. alpha-casein is the usual test substrate. In the absence of ATP, only oligopeptides shorter than five residues are hydrolyzed (such as succinyl-Leu-Tyr-|-NHMec, and Leu-Tyr-Leu-|-Tyr-Trp, in which cleavage of the -Tyr-|-Leu- and -Tyr-|-Trp bonds also occurs).. Functionally, cleaves peptides in various proteins in a process that requires ATP hydrolysis. Has a chymotrypsin-like activity. Plays a major role in the degradation of misfolded proteins. The chain is ATP-dependent Clp protease proteolytic subunit from Cucumis sativus (Cucumber).